The chain runs to 174 residues: Peptide methionine sulfoxide reductase MsrA (174 aa).

The active site involves Cys11.

It belongs to the MsrA Met sulfoxide reductase family.

The enzyme catalyses L-methionyl-[protein] + [thioredoxin]-disulfide + H2O = L-methionyl-(S)-S-oxide-[protein] + [thioredoxin]-dithiol. It catalyses the reaction [thioredoxin]-disulfide + L-methionine + H2O = L-methionine (S)-S-oxide + [thioredoxin]-dithiol. Has an important function as a repair enzyme for proteins that have been inactivated by oxidation. Catalyzes the reversible oxidation-reduction of methionine sulfoxide in proteins to methionine. This is Peptide methionine sulfoxide reductase MsrA from Pasteurella multocida (strain Pm70).